The following is a 635-amino-acid chain: Factor of DNA methylation 2 (635 aa).

Positions 289–471 form a coiled coil; the sequence is LDEKKNLHQA…ESMNSVLMTK (183 aa). Over residues 350 to 365 the composition is skewed to basic and acidic residues; that stretch reads ELERQKLDEDKRKSDA. Residues 350-376 are disordered; the sequence is ELERQKLDEDKRKSDAMNKSLQLASRE.

In terms of assembly, forms a complex with IDN2 and FMD1/INDL1. In terms of tissue distribution, highly expressed in flowers and at lower levels in roots, leaves and stems.

Forms a complex with IDN2 and FDM1/IDNL1 that is required for RNA-directed DNA methylation (RdDM) and that functions at a downstream step of the RdDM pathway. The sequence is that of Factor of DNA methylation 2 from Arabidopsis thaliana (Mouse-ear cress).